The chain runs to 183 residues: MSQPAKVLLLYAHPESQDSVANRVLLKPAIQHNNVTVHDLYARYPDFFIDTPYEQALLREHDVIVFQHPLYTYSCPALLKEWLDRVLSRGLASGPGGNQLVGKYWRSVITTGEPESAYRYDALNRYPMSDVLRPFELTAAMCRMHWMPPIIVYWARRQSPQTLASHAKAYGEWLANPVSAGGY.

It belongs to the NAD(P)H dehydrogenase (quinone) family. KefG subfamily. Interacts with KefB.

The protein resides in the cell inner membrane. It catalyses the reaction a quinone + NADH + H(+) = a quinol + NAD(+). It carries out the reaction a quinone + NADPH + H(+) = a quinol + NADP(+). Its function is as follows. Regulatory subunit of a potassium efflux system that confers protection against electrophiles. Required for full activity of KefB. This is Glutathione-regulated potassium-efflux system ancillary protein KefG from Salmonella gallinarum (strain 287/91 / NCTC 13346).